Consider the following 552-residue polypeptide: Chaperonin GroEL (552 aa).

ATP contacts are provided by residues 30–33, Lys-51, 87–91, Gly-415, 479–481, and Asp-495; these read TLGP, DGTTT, and NAA.

This sequence belongs to the chaperonin (HSP60) family. In terms of assembly, forms a cylinder of 14 subunits composed of two heptameric rings stacked back-to-back. Interacts with the co-chaperonin GroES.

Its subcellular location is the cytoplasm. It carries out the reaction ATP + H2O + a folded polypeptide = ADP + phosphate + an unfolded polypeptide.. In terms of biological role, together with its co-chaperonin GroES, plays an essential role in assisting protein folding. The GroEL-GroES system forms a nano-cage that allows encapsulation of the non-native substrate proteins and provides a physical environment optimized to promote and accelerate protein folding. In Nitrosospira multiformis (strain ATCC 25196 / NCIMB 11849 / C 71), this protein is Chaperonin GroEL.